A 405-amino-acid chain; its full sequence is Tryptophan synthase beta chain (405 aa).

Lys98 is subject to N6-(pyridoxal phosphate)lysine.

Belongs to the TrpB family. In terms of assembly, tetramer of two alpha and two beta chains. Pyridoxal 5'-phosphate is required as a cofactor.

It carries out the reaction (1S,2R)-1-C-(indol-3-yl)glycerol 3-phosphate + L-serine = D-glyceraldehyde 3-phosphate + L-tryptophan + H2O. It participates in amino-acid biosynthesis; L-tryptophan biosynthesis; L-tryptophan from chorismate: step 5/5. In terms of biological role, the beta subunit is responsible for the synthesis of L-tryptophan from indole and L-serine. This Methylococcus capsulatus (strain ATCC 33009 / NCIMB 11132 / Bath) protein is Tryptophan synthase beta chain.